The sequence spans 278 residues: MSVPTVLQKILARKAEEVAERRARVNLAEVERLARSADAPRGFANALLERAKRKEPAVIAEIKKASPSKGVLREHFVPAEIARSYEAGGAACLSVLTDVDFFQGADAYLKEARAACALPVVRKDFMIDPYQIVEARAIGADCILLIVSALDDVLMAELAATAKSVGLDVLVEVHDGTELERALKTLDTPLVGINNRNLHTFEVSLETTLDLLPEIPRDRLVVTESGILNRADVELMEVSEVYAFLVGEAFMRADDPGLELKRLFFQERGGVVLGADPD.

The protein belongs to the TrpC family.

The enzyme catalyses 1-(2-carboxyphenylamino)-1-deoxy-D-ribulose 5-phosphate + H(+) = (1S,2R)-1-C-(indol-3-yl)glycerol 3-phosphate + CO2 + H2O. It participates in amino-acid biosynthesis; L-tryptophan biosynthesis; L-tryptophan from chorismate: step 4/5. This chain is Indole-3-glycerol phosphate synthase, found in Pseudomonas aeruginosa (strain UCBPP-PA14).